Reading from the N-terminus, the 275-residue chain is Probable histone chaperone asf-1 (275 aa).

3 stretches are compositionally biased toward acidic residues: residues 157–166 (EDPVAEPVED), 183–207 (DGQE…EVDL), and 230–247 (KMED…DDEP). The disordered stretch occupies residues 157–275 (EDPVAEPVED…SDKTNNEMVQ (119 aa)). Residues 265–275 (LSDKTNNEMVQ) are compositionally biased toward basic and acidic residues.

The protein belongs to the ASF1 family. As to quaternary structure, interacts with histone H3 and histone H4.

The protein localises to the nucleus. Its function is as follows. Histone chaperone that facilitates histone deposition and histone exchange and removal during nucleosome assembly and disassembly. The protein is Probable histone chaperone asf-1 of Caenorhabditis elegans.